The chain runs to 923 residues: Leucine--tRNA ligase (923 aa).

Positions Pro41 to His52 match the 'HIGH' region motif. A 'KMSKS' region motif is present at residues Lys698–Ser702. Lys701 contacts ATP.

This sequence belongs to the class-I aminoacyl-tRNA synthetase family.

The protein localises to the cytoplasm. The catalysed reaction is tRNA(Leu) + L-leucine + ATP = L-leucyl-tRNA(Leu) + AMP + diphosphate. This is Leucine--tRNA ligase from Amoebophilus asiaticus (strain 5a2).